Consider the following 285-residue polypeptide: Type II secretion system protein C (285 aa).

Residues 1–27 are Cytoplasmic-facing; that stretch reads MARLQAFKDPSFHSLVATFRSLPLIRR. The helical transmembrane segment at 28-48 threads the bilayer; sequence FVLGLILLLICQQLAVLTWRF. Residues 49–285 are Periplasmic-facing; that stretch reads LLPEDSRIVG…DIYLALDGDH (237 aa).

This sequence belongs to the GSP C family.

It is found in the cell inner membrane. Its function is as follows. Involved in a type II secretion system (T2SS, formerly general secretion pathway, GSP) for the export of proteins. Required for the translocation of the multiple pectic enzymes. In Pectobacterium carotovorum subsp. carotovorum (Erwinia carotovora subsp. carotovora), this protein is Type II secretion system protein C (outC).